The sequence spans 172 residues: Oleosin 18 kDa (172 aa).

The residue at position 2 (Ala2) is an N-acetylalanine. The polar stretch occupies residues 2–38; sequence ADRDRAGQYYQQQRGQVGETVKGILPEKAPSASQALT. Positions 39-110 are hydrophobic; that stretch reads VATLFPLGGL…GGLSSLTFLA (72 aa). Helical transmembrane passes span 42–62, 70–90, and 91–111; these read LFPLGGLLLVLSGLALAASVV, VFLIFSPVLVPAALLIGLAVA, and GFLTSGALGLGGLSSLTFLAN. The segment at 147–172 is disordered; the sequence is HAIQGRADQAGTGAGAGGGAGTKTSS. Over residues 158 to 172 the composition is skewed to gly residues; the sequence is TGAGAGGGAGTKTSS.

This sequence belongs to the oleosin family.

The protein resides in the lipid droplet. Its subcellular location is the membrane. Functionally, may have a structural role to stabilize the lipid body during desiccation of the seed by preventing coalescence of the oil. Probably interacts with both lipid and phospholipid moieties of lipid bodies. May also provide recognition signals for specific lipase anchorage in lipolysis during seedling growth. The sequence is that of Oleosin 18 kDa (OLE18) from Oryza sativa subsp. indica (Rice).